The primary structure comprises 65 residues: Large ribosomal subunit protein bL35 (65 aa).

The interval 1-20 (MPKMKTNSGSKKRFTLTGTG) is disordered.

Belongs to the bacterial ribosomal protein bL35 family.

The polypeptide is Large ribosomal subunit protein bL35 (Bacteroides thetaiotaomicron (strain ATCC 29148 / DSM 2079 / JCM 5827 / CCUG 10774 / NCTC 10582 / VPI-5482 / E50)).